Reading from the N-terminus, the 209-residue chain is Large ribosomal subunit protein uL3 (209 aa).

Belongs to the universal ribosomal protein uL3 family. In terms of assembly, part of the 50S ribosomal subunit. Forms a cluster with proteins L14 and L19.

In terms of biological role, one of the primary rRNA binding proteins, it binds directly near the 3'-end of the 23S rRNA, where it nucleates assembly of the 50S subunit. This is Large ribosomal subunit protein uL3 from Clostridium tetani (strain Massachusetts / E88).